Here is a 762-residue protein sequence, read N- to C-terminus: Primary amine oxidase, lung isozyme (762 aa).

The signal sequence occupies residues 1–16 (MFIFIFLSLWTLLVMG). A disordered region spans residues 23-54 (GSEEGVGKQCHPSLPPRCPSRSPSDQPWTHPD). An N-linked (GlcNAc...) asparagine glycan is attached at asparagine 136. Cysteine 197 and cysteine 198 are joined by a disulfide. The O-linked (GalNAc...) threonine glycan is linked to threonine 211. N-linked (GlcNAc...) asparagine glycans are attached at residues asparagine 231 and asparagine 293. Position 383 to 393 (383 to 393 (YMDACFGMGKF)) interacts with substrate. The Proton acceptor role is filled by aspartate 385. Cysteine 403 and cysteine 429 form a disulfide bridge. 467–472 (LLNYDY) is a substrate binding site. Tyrosine 470 acts as the Schiff-base intermediate with substrate; via topaquinone in catalysis. Tyrosine 470 is modified (2',4',5'-topaquinone). Residues histidine 519 and histidine 521 each contribute to the Cu cation site. Residues aspartate 528, leucine 529, aspartate 530, and glutamate 571 each coordinate Ca(2+). Residue 577-584 (PLGGGSPR) participates in heparin binding. Asparagine 617 is a glycosylation site (N-linked (GlcNAc...) asparagine). Phenylalanine 662 and asparagine 664 together coordinate Ca(2+). Asparagine 665 carries an N-linked (GlcNAc...) asparagine glycan. Residues glutamate 666, aspartate 672, and leucine 673 each coordinate Ca(2+). Histidine 683 is a Cu cation binding site. Cysteine 733 and cysteine 740 are disulfide-bonded.

The protein belongs to the copper/topaquinone oxidase family. In terms of assembly, homodimer; disulfide-linked. Requires Cu cation as cofactor. Ca(2+) serves as cofactor. The cofactor is L-topaquinone. Topaquinone (TPQ) is generated by copper-dependent autoxidation of a specific tyrosyl residue. Expressed in lung, spleen, heart and kidney.

Its subcellular location is the secreted. The protein localises to the extracellular space. It carries out the reaction a primary methyl amine + O2 + H2O = an aldehyde + H2O2 + NH4(+). This chain is Primary amine oxidase, lung isozyme, found in Bos taurus (Bovine).